A 512-amino-acid polypeptide reads, in one-letter code: Phosphoenolpyruvate carboxylase (512 aa).

It belongs to the PEPCase type 2 family. As to quaternary structure, homotetramer. Mg(2+) serves as cofactor.

It catalyses the reaction oxaloacetate + phosphate = phosphoenolpyruvate + hydrogencarbonate. Its function is as follows. Catalyzes the irreversible beta-carboxylation of phosphoenolpyruvate (PEP) to form oxaloacetate (OAA), a four-carbon dicarboxylic acid source for the tricarboxylic acid cycle. This Caldivirga maquilingensis (strain ATCC 700844 / DSM 13496 / JCM 10307 / IC-167) protein is Phosphoenolpyruvate carboxylase.